The sequence spans 85 residues: Large ribosomal subunit protein bL27 (85 aa).

A disordered region spans residues 1 to 20 (MAHKKAGGSTRNGRDSESKR).

The protein belongs to the bacterial ribosomal protein bL27 family.

The sequence is that of Large ribosomal subunit protein bL27 from Yersinia enterocolitica serotype O:8 / biotype 1B (strain NCTC 13174 / 8081).